Consider the following 528-residue polypeptide: GMP synthase [glutamine-hydrolyzing] (528 aa).

One can recognise a Glutamine amidotransferase type-1 domain in the interval 13-204; it reads SILILDFGSQ…VYKISCCTAD (192 aa). Residue Cys90 is the Nucleophile of the active site. Residues His178 and Glu180 contribute to the active site. A GMPS ATP-PPase domain is found at 205–403; the sequence is WTTETYIEET…LGLPDEIIKR (199 aa). 232–238 is an ATP binding site; sequence SGGVDSS.

In terms of assembly, homodimer.

It carries out the reaction XMP + L-glutamine + ATP + H2O = GMP + L-glutamate + AMP + diphosphate + 2 H(+). It participates in purine metabolism; GMP biosynthesis; GMP from XMP (L-Gln route): step 1/1. Catalyzes the synthesis of GMP from XMP. The protein is GMP synthase [glutamine-hydrolyzing] of Prochlorococcus marinus (strain AS9601).